The sequence spans 452 residues: Probable phosphoglucosamine mutase (452 aa).

Residue serine 101 is the Phosphoserine intermediate of the active site. The Mg(2+) site is built by serine 101, aspartate 242, aspartate 244, and aspartate 246. A Phosphoserine modification is found at serine 101.

This sequence belongs to the phosphohexose mutase family. Mg(2+) serves as cofactor. Activated by phosphorylation.

The catalysed reaction is alpha-D-glucosamine 1-phosphate = D-glucosamine 6-phosphate. Catalyzes the conversion of glucosamine-6-phosphate to glucosamine-1-phosphate. This chain is Probable phosphoglucosamine mutase, found in Methanosphaera stadtmanae (strain ATCC 43021 / DSM 3091 / JCM 11832 / MCB-3).